Reading from the N-terminus, the 553-residue chain is Probable malate:quinone oxidoreductase (553 aa).

The interval 524-553 is disordered; the sequence is PPPKIDLGAPSQATGNAPARPAKASADMAL.

Belongs to the MQO family. The cofactor is FAD.

The catalysed reaction is (S)-malate + a quinone = a quinol + oxaloacetate. It functions in the pathway carbohydrate metabolism; tricarboxylic acid cycle; oxaloacetate from (S)-malate (quinone route): step 1/1. This Burkholderia cenocepacia (strain HI2424) protein is Probable malate:quinone oxidoreductase.